The chain runs to 80 residues: Protein YibX (80 aa).

This is Protein YibX from Escherichia coli (strain K12).